Reading from the N-terminus, the 576-residue chain is Epsin-1 (576 aa).

Residues arginine 8, lysine 11, arginine 25, asparagine 30, arginine 63, and histidine 73 each contribute to the a 1,2-diacyl-sn-glycero-3-phospho-(1D-myo-inositol-4,5-bisphosphate) site. Positions 12–144 (NIVHNYSEAE…RDEDRLREER (133 aa)) constitute an ENTH domain. The tract at residues 149–185 (KTKEKLAQTATASSAAVGSGPPPEAEQAWPQSSGEEE) is disordered. Low complexity predominate over residues 157 to 167 (TATASSAAVGS). 3 UIM domains span residues 183-202 (EEEL…ADQP), 208-227 (EDDA…HDKE), and 233-252 (GDDL…TGGK). Low complexity predominate over residues 265 to 296 (TAPAPAPTTDPWGGPAPMAAAVPTAAPTSDPW). Residues 265-404 (TAPAPAPTTD…GGFDTEPDEF (140 aa)) are disordered. 8 tandem repeats follow at residues 274–276 (DPW), 294–296 (DPW), 306–308 (DPW), 319–321 (DPW), 332–334 (DPW), 349–351 (DPW), 367–369 (DPW), and 377–379 (DPW). Residues 274 to 379 (DPWGGPAPMA…TPAPAFSDPW (106 aa)) form an 8 X 3 AA repeats of [ED]-P-W region. Pro residues predominate over residues 297 to 314 (GGPPVPPAADPWGGPAPT). Positions 332–368 (DPWGGTPAPAAGEGPTPDPWGSSDGGVPVSGPSASDP) are enriched in low complexity. Serine 382 carries the post-translational modification Phosphoserine; by CDK1. Residues 402 to 411 (DEFSDFDRLR) carry the [DE]-X(1,2)-F-X-X-[FL]-X-X-X-R motif motif. Phosphoserine occurs at positions 419, 420, 435, 447, and 454. Residues 448 to 576 (LAEAVGSPPP…PAPNTNPFLL (129 aa)) form a disordered region. The segment covering 454–468 (SPPPAATPTPTPPTR) has biased composition (pro residues). 3 positions are modified to phosphothreonine: threonine 460, threonine 464, and threonine 470. At serine 473 the chain carries Phosphoserine. Threonine 494 carries the phosphothreonine modification. Repeat copies occupy residues 502-504 (NPF) and 518-520 (NPF). Residues 502–574 (NPFLPGGGPA…GPPAPNTNPF (73 aa)) form a 3 X 3 AA repeats of N-P-F region. Arginine 534 carries the post-translational modification Omega-N-methylarginine. Positions 557 to 570 (GLPPMMPPGPPAPN) are enriched in pro residues. Copy 3 of the repeat occupies 572–574 (NPF).

It belongs to the epsin family. As to quaternary structure, monomer. Binds clathrin, ZBTB16/ZNF145 and ITSN1. Binds ubiquitinated proteins. Binds AP2A1 and AP2A2. Interacts with RALBP1 in a complex also containing NUMB and TFAP2A during interphase and mitosis. Interacts with AP2B1. Interacts with UBQLN2. Interacts with REPS2; the interaction is direct. Interacts with EPS15; the interaction is direct. Interacts with ENTREP1. Phosphorylated on serine and/or threonine residues in mitotic cells. Phosphorylation reduces interaction with REPS2, AP-2 and the membrane fraction. Depolarization of synaptosomes results in dephosphorylation. Post-translationally, ubiquitinated.

The protein localises to the cytoplasm. Its subcellular location is the cell membrane. It is found in the nucleus. It localises to the membrane. The protein resides in the clathrin-coated pit. Its function is as follows. Binds to membranes enriched in phosphatidylinositol 4,5-bisphosphate (PtdIns(4,5)P2). Modifies membrane curvature and facilitates the formation of clathrin-coated invaginations. Regulates receptor-mediated endocytosis. This chain is Epsin-1 (EPN1), found in Homo sapiens (Human).